The primary structure comprises 208 residues: Imidazole glycerol phosphate synthase subunit HisH (208 aa).

One can recognise a Glutamine amidotransferase type-1 domain in the interval 1–206 (MFAIVDYDTG…KEMVSANDFS (206 aa)). The active-site Nucleophile is the Cys-79. Residues His-181 and Glu-183 contribute to the active site.

Heterodimer of HisH and HisF.

The protein resides in the cytoplasm. It catalyses the reaction 5-[(5-phospho-1-deoxy-D-ribulos-1-ylimino)methylamino]-1-(5-phospho-beta-D-ribosyl)imidazole-4-carboxamide + L-glutamine = D-erythro-1-(imidazol-4-yl)glycerol 3-phosphate + 5-amino-1-(5-phospho-beta-D-ribosyl)imidazole-4-carboxamide + L-glutamate + H(+). The catalysed reaction is L-glutamine + H2O = L-glutamate + NH4(+). It functions in the pathway amino-acid biosynthesis; L-histidine biosynthesis; L-histidine from 5-phospho-alpha-D-ribose 1-diphosphate: step 5/9. Functionally, IGPS catalyzes the conversion of PRFAR and glutamine to IGP, AICAR and glutamate. The HisH subunit catalyzes the hydrolysis of glutamine to glutamate and ammonia as part of the synthesis of IGP and AICAR. The resulting ammonia molecule is channeled to the active site of HisF. The polypeptide is Imidazole glycerol phosphate synthase subunit HisH (Lactiplantibacillus plantarum (strain ATCC BAA-793 / NCIMB 8826 / WCFS1) (Lactobacillus plantarum)).